We begin with the raw amino-acid sequence, 546 residues long: Phosphoglucomutase (546 aa).

Ser-135 functions as the Phosphoserine intermediate in the catalytic mechanism. Mg(2+)-binding residues include Ser-135, Asp-288, Asp-290, and Asp-292.

The protein belongs to the phosphohexose mutase family. Mg(2+) serves as cofactor.

It carries out the reaction alpha-D-glucose 1-phosphate = alpha-D-glucose 6-phosphate. It functions in the pathway glycolipid metabolism; diglucosyl-diacylglycerol biosynthesis. In terms of biological role, catalyzes the interconversion between glucose-6-phosphate and alpha-glucose-1-phosphate. This is the first step in the biosynthesis of diglucosyl-diacylglycerol (Glc2-DAG), i.e. a glycolipid found in the membrane, which is also used as a membrane anchor for lipoteichoic acid (LTA). This is Phosphoglucomutase (pgcA) from Staphylococcus epidermidis (strain ATCC 35984 / DSM 28319 / BCRC 17069 / CCUG 31568 / BM 3577 / RP62A).